The sequence spans 432 residues: MAVAPAGGQHAPALEALLGAGALRLLDSSQIVIISTAPDVGAPQVPTGPAAPPAGPRDPDVLLFATPQAPRPAPSAPRPALGRPPVKRRLDLETDHQYLAGSSGPFRGRGRHPGKGVKSPGEKSRYETSLNLTTKRFLELLSHSADGVVDLNWAAEVLKVQKRRIYDITNVLEGIQLIAKKSKNHIQWLGSRTMVGIGQRLEGLTQDLQQLQESEQQLDHLMHICTTQLQLLSEDSDIQRLAYVTCQDLRSIADPAEQMVIVIKAPPETQLQAVDSAETFQISLKSKQGPIDVFLCPEESAEGISPGRTSYQETSGEDRNADSGTAGPPPSPPSTSPTLDPSQSLLGLEQEAVLPRIGNLRAPMEEDRLSPLVAADSLLEHVKEDFSGLLPGEFISLSPPHEAVDYHFGLEEGEGIRDLFDCDFGDLTPLDF.

2 disordered regions span residues 39 to 85 and 98 to 126; these read DVGA…GRPP and YLAG…KSRY. Residues 65-106 form a cyclin A:CDK2 binding region; that stretch reads ATPQAPRPAPSAPRPALGRPPVKRRLDLETDHQYLAGSSGPF. An interaction with BIRC2/c-IAP1 region spans residues 87-189; that stretch reads KRRLDLETDH…KKSKNHIQWL (103 aa). A DNA-binding region spans residues 108–192; the sequence is GRGRHPGKGV…KNHIQWLGSR (85 aa). 3 positions are modified to N6-acetyllysine: Lys-115, Lys-118, and Lys-123. Residues 151–172 form a leucine-zipper region; sequence LNWAAEVLKVQKRRIYDITNVL. Positions 156-192 match the DEF box motif; that stretch reads EVLKVQKRRIYDITNVLEGIQLIAKKSKNHIQWLGSR. Position 183 is an N6-methyllysine; by SETD7 (Lys-183). A required for interaction with TRIM28 region spans residues 190 to 377; it reads GSRTMVGIGQ…RLSPLVAADS (188 aa). The dimerization stretch occupies residues 193–282; the sequence is TMVGIGQRLE…AVDSAETFQI (90 aa). The interval 297–342 is disordered; that stretch reads PEESAEGISPGRTSYQETSGEDRNADSGTAGPPPSPPSTSPTLDPS. Residues 363-432 form a transactivation region; it reads PMEEDRLSPL…DFGDLTPLDF (70 aa). Residues Ser-370 and Ser-398 each carry the phosphoserine modification. The segment at 404 to 421 is RB1 binding; sequence VDYHFGLEEGEGIRDLFD. Thr-428 is modified (phosphothreonine).

This sequence belongs to the E2F/DP family. In terms of assembly, component of the DRTF1/E2F transcription factor complex. Forms heterodimers with DP family members. The E2F1 complex binds specifically hypophosphorylated RB1, the interaction represses E2F1-driven transcription. During the cell cycle, RB1 becomes phosphorylated in mid-to-late G1 phase, detaches from the DRTF1/E2F complex, rendering E2F transcriptionally active. Interacts with TRRAP, which probably mediates its interaction with histone acetyltransferase complexes, leading to transcription activation. Binds TOPBP1 and EAPP. Interacts with ARID3A. Interacts with TRIM28; the interaction inhibits E2F1 acetylation through recruiting HDAC1 and represses its transcriptional activity. Interaction with KAT2B; the interaction acetylates E2F1 enhancing its DNA-binding and transcriptional activity. Interacts with BIRC2/c-IAP1 (via BIR domains). The complex TFDP1:E2F1 interacts with CEBPA; the interaction prevents CEBPA binding to target genes promoters and represses its transcriptional activity. Interacts with RRP1B. Interacts with HCFC1. Interacts with KMT2E; the interaction is probably indirect and is mediated via HCFC1. Interacts with DCAF5 and L3MBTL3; the interaction requires methylation at Lys-183 and is necessary to target E2F1 for ubiquitination by the CRL4-DCAF5 E3 ubiquitin ligase complex. In terms of processing, phosphorylated by CDK2 and cyclin A-CDK2 in the S-phase. Phosphorylation by CHEK2 stabilizes E2F1 upon DNA damage and regulates its effect on transcription and apoptosis. Phosphorylation at Ser-398 by GSK3B promotes interaction with USP11, leading to its deubiquitination and stabilization. Post-translationally, ubiquitinated via 'Lys-63'-linked ubiquitin, leading to its degradation. Deubiquitinated by USP11 following phosphorylation by GSK3B, promoting its stability. Acetylation stimulates DNA-binding. Enhanced under stress conditions such as DNA damage and inhibited by retinoblastoma protein RB1. Regulated by KAP1/TRIM28 which recruits HDAC1 to E2F1 resulting in deacetylation. In terms of processing, methylation at Lys-183 by SETD7 promotes E2F1 ubiquitin-dependent proteasomal degradation.

The protein resides in the nucleus. With respect to regulation, BIRC2/c-IAP1 stimulates its transcriptional activity. In terms of biological role, transcription activator that binds DNA cooperatively with DP proteins through the E2 recognition site, 5'-TTTC[CG]CGC-3' found in the promoter region of a number of genes whose products are involved in cell cycle regulation or in DNA replication. The DRTF1/E2F complex functions in the control of cell-cycle progression from G1 to S phase. E2F1 binds preferentially RB1 in a cell-cycle dependent manner. It can mediate both cell proliferation and TP53/p53-dependent apoptosis. Blocks adipocyte differentiation by binding to specific promoters repressing CEBPA binding to its target gene promoters. Directly activates transcription of PEG10. Positively regulates transcription of RRP1B. In Rattus norvegicus (Rat), this protein is Transcription factor E2F1.